A 67-amino-acid chain; its full sequence is Preprofallaxidin-1 (67 aa).

The first 22 residues, 1-22 (MASLKKSLFLVLFLGMVSLSIC), serve as a signal peptide directing secretion. Residues 23–46 (DKEKREGENEEEEEEHEEESEEKR) constitute a propeptide that is removed on maturation. A disordered region spans residues 24–46 (KEKREGENEEEEEEHEEESEEKR). Positions 30-42 (ENEEEEEEHEEES) are enriched in acidic residues.

Expressed by the skin glands.

Its subcellular location is the secreted. Fallaxidin-4.1 shows antibacterial activity against the Gram-positive bacteria L.lactis (MIC=12 uM), M.luteus (MIC=100 uM), S.epidermidis (MIC=100 uM) and S.uberis (MIC=50 uM). No antibacterial activity against the Gram-positive bacteria B.cereus, E.faecalis, L.innocua, S.aureus, or the Gram-negative bacteria E.cloacae and E.coli. Inhibits the formation of NO by neuronal nitric oxide synthase with an IC(50) of 13.3 uM. The polypeptide is Preprofallaxidin-1 (Litoria fallax (Eastern dwarf tree frog)).